An 81-amino-acid polypeptide reads, in one-letter code: Cytochrome b559 subunit alpha (81 aa).

A helical transmembrane segment spans residues 22 to 36 (VIHSITIPSLFIAGW). His-24 serves as a coordination point for heme.

The protein belongs to the PsbE/PsbF family. Heterodimer of an alpha subunit and a beta subunit. PSII is composed of 1 copy each of membrane proteins PsbA, PsbB, PsbC, PsbD, PsbE, PsbF, PsbH, PsbI, PsbJ, PsbK, PsbL, PsbM, PsbT, PsbX, PsbY, PsbZ, Psb30/Ycf12, at least 3 peripheral proteins of the oxygen-evolving complex and a large number of cofactors. It forms dimeric complexes. The cofactor is heme b.

The protein resides in the plastid. Its subcellular location is the chloroplast thylakoid membrane. Its function is as follows. This b-type cytochrome is tightly associated with the reaction center of photosystem II (PSII). PSII is a light-driven water:plastoquinone oxidoreductase that uses light energy to abstract electrons from H(2)O, generating O(2) and a proton gradient subsequently used for ATP formation. It consists of a core antenna complex that captures photons, and an electron transfer chain that converts photonic excitation into a charge separation. The sequence is that of Cytochrome b559 subunit alpha from Cyanidioschyzon merolae (strain NIES-3377 / 10D) (Unicellular red alga).